The sequence spans 1040 residues: Neprilysin-4 (1040 aa).

The segment at 1–27 (MSRHSQLKLAMPSVHGAPATAPGSPMN) is disordered. The interval 1-45 (MSRHSQLKLAMPSVHGAPATAPGSPMNAKARSVKLGLGVNQRTGR) is required for maintaining muscle integrity. At 1-55 (MSRHSQLKLAMPSVHGAPATAPGSPMNAKARSVKLGLGVNQRTGRVQWCPGLTCC) the chain is on the cytoplasmic side. Residues 56–76 (KMLLLLPVVMLPLTLVLILIM) form a helical; Signal-anchor for type II membrane protein membrane-spanning segment. Topologically, residues 77–1040 (RLDGMLAALQ…MNPQKKCSVW (964 aa)) are extracellular. Residues 251 to 1040 (EEGTREGIRM…MNPQKKCSVW (790 aa)) form the Peptidase M13 domain. Disulfide bonds link Cys277–Cys1025, Cys285–Cys985, Cys452–Cys700, and Cys909–Cys1037. N-linked (GlcNAc...) asparagine glycans are attached at residues Asn387, Asn593, Asn723, and Asn819. His872 is a binding site for Zn(2+). Residue Glu873 is part of the active site. A Zn(2+)-binding site is contributed by His876. Residue Asn916 is glycosylated (N-linked (GlcNAc...) asparagine). Glu934 lines the Zn(2+) pocket. Asp938 functions as the Proton donor in the catalytic mechanism. Asn969 carries an N-linked (GlcNAc...) asparagine glycan.

Belongs to the peptidase M13 family. Interacts (via intracellular domain) with the putative carbohydrate kinase CG3534. The cofactor is Zn(2+). As to expression, expressed in the gonads and testes of adults, and the adult and larval brain (at protein level). In embryos, expressed in the pericardial, muscle founder and glia cells (at protein level). In stage 12 embryos, expressed in specific dorsal muscle founder cells such as DA1 and DO2, and also in the certain pericardial progenitor cells where expression persists throughout embryogenesis. Expressed in the glia cells of the embryonic, larval and adult central nervous system. Expressed in the somatic muscles of larvae, pupae and adults. Isoform A: Detected in the male abdomen (at protein level). Isoform B: Not detected in the male or female abdomen (at protein level).

The protein resides in the cell membrane. It is found in the sarcoplasmic reticulum. The protein localises to the cytoplasm. The catalysed reaction is Preferential cleavage of polypeptides between hydrophobic residues, particularly with Phe or Tyr at P1'.. In terms of biological role, metalloendoprotease which cleaves peptides at the amino side of hydrophobic residues - such as the hormones Akh and Dh31, and the neuropeptides Allatostatins (AST1, AST2, AST3 and AST4), Crz, Drosulfakinins (DSK-I and DSK-II), Lk, sNPF and the tachykinin peptides TK-1, TK-2, TK-4 and TK-5. Functions in female fertility, memory formation and may also act in regulating insulin signaling and food intake. Likely to be involved in controlling feeding behavior and the expression of insulin-like peptides by cleaving various regulatory peptides that include certain Drosulfakinins, Allatostatins and tachykinin peptides. Required in females for normal patterns of egg laying and hatching. Required in the dorsal paired medial neurons for the proper formation of long-term (LTM) and middle-term memories (MTM). Also required in the mushroom body neurons where it functions redundantly with neprilysins Nep2 and Nep3, in normal LTM formation. Cleaves angiotensin-1 and tachykinin neuropeptide substance P. Functions in maintaining muscle integrity, possibly independently of its endopeptidase activity. The sequence is that of Neprilysin-4 from Drosophila melanogaster (Fruit fly).